Here is a 77-residue protein sequence, read N- to C-terminus: uncharacterized protein (77 aa).

The chain crosses the membrane as a helical span at residues 57–76; that stretch reads NSAVICTLIANLMAFFMLLT.

It localises to the membrane. This is an uncharacterized protein from Schizosaccharomyces pombe (strain 972 / ATCC 24843) (Fission yeast).